The chain runs to 597 residues: NADPH-dependent diflavin oxidoreductase 1 (597 aa).

The Flavodoxin-like domain occupies 6–150; sequence LLVLFGSQTG…AIDPWLQDLW (145 aa). FMN is bound by residues 12–17, 59–62, 97–106, and Asp132; these read SQTGTA, ATTG, and LGDSSYAKFN. The FAD-binding FR-type domain maps to 206-446; it reads LQPFLAPMVS…WVRSGGLTFP (241 aa). FAD contacts are provided by residues Arg350, 382–385, and 416–419; these read RAFS and GLCS. NADP(+) contacts are provided by residues Thr460, 515-516, 521-525, and Asp558; these read SR and KVYVQ. An FAD-binding site is contributed by Trp596.

The protein belongs to the NADPH-dependent diflavin oxidoreductase NDOR1 family. In the N-terminal section; belongs to the flavodoxin family. This sequence in the C-terminal section; belongs to the flavoprotein pyridine nucleotide cytochrome reductase family. Interacts with CIAPIN1; as part of the cytosolic iron-sulfur (Fe-S) protein assembly (CIA) machinery. Interacts with DCPS. FAD is required as a cofactor. The cofactor is FMN.

The protein resides in the cytoplasm. The protein localises to the perinuclear region. It catalyses the reaction 2 oxidized [2Fe-2S]-[protein] + NADPH = 2 reduced [2Fe-2S]-[protein] + NADP(+) + H(+). Functionally, NADPH-dependent reductase which is a central component of the cytosolic iron-sulfur (Fe-S) protein assembly (CIA) machinery. Transfers electrons from NADPH via its FAD and FMN prosthetic groups to the [2Fe-2S] cluster of CIAPIN1, another key component of the CIA machinery. In turn, this reduced cluster provides electrons for assembly of cytosolic iron-sulfur cluster proteins. It can also reduce the [2Fe-2S] cluster of CISD1 and activate this protein implicated in Fe/S cluster repair. In vitro can fully activate methionine synthase/MTR in the presence of soluble cytochrome b5/CYB5A. This Bos taurus (Bovine) protein is NADPH-dependent diflavin oxidoreductase 1.